Consider the following 375-residue polypeptide: Pectate lyase B (375 aa).

The first 22 residues, 1 to 22, serve as a signal peptide directing secretion; the sequence is MKSLITPIAAGLLLAFSQYSLA. Residues Cys-93 and Cys-176 are joined by a disulfide bond. The Ca(2+) site is built by Asp-150, Asp-152, Glu-187, and Asp-191. Arg-240 is an active-site residue. Cys-351 and Cys-374 are oxidised to a cystine.

Belongs to the polysaccharide lyase 1 family. PLADES subfamily. It depends on Ca(2+) as a cofactor.

Its subcellular location is the secreted. It carries out the reaction Eliminative cleavage of (1-&gt;4)-alpha-D-galacturonan to give oligosaccharides with 4-deoxy-alpha-D-galact-4-enuronosyl groups at their non-reducing ends.. It participates in glycan metabolism; pectin degradation; 2-dehydro-3-deoxy-D-gluconate from pectin: step 2/5. Functionally, involved in maceration and soft-rotting of plant tissue. This is Pectate lyase B (pelB) from Dickeya chrysanthemi (Pectobacterium chrysanthemi).